Reading from the N-terminus, the 130-residue chain is MKNKFSIKVKFPEGILGFEDIKEFIIKDSAHKPFSIMQSINGEINFLVTSPFNFLEKYLPNIENKDWLDIQAENENEKVILCIINMHVKNYKEITANLKAPIILNKKKLIGKQAISTNEEHYLRYRVFKE.

This sequence belongs to the FliW family. Interacts with translational regulator CsrA and flagellin(s).

The protein resides in the cytoplasm. Functionally, acts as an anti-CsrA protein, binds CsrA and prevents it from repressing translation of its target genes, one of which is flagellin. Binds to flagellin and participates in the assembly of the flagellum. The polypeptide is Flagellar assembly factor FliW (Borrelia duttonii (strain Ly)).